The primary structure comprises 133 residues: Sec-independent protein translocase protein TatB (133 aa).

Residues 1-21 (MFDIGFWELVLIAIVALVVLG) traverse the membrane as a helical segment. Residues 67 to 133 (EQMGMQNLSP…ASQPAEKKAE (67 aa)) form a disordered region. Polar residues predominate over residues 70–84 (GMQNLSPELQKSVES). Over residues 97-116 (AATPSSEASSTSSNPSSATE) the composition is skewed to low complexity.

It belongs to the TatB family. In terms of assembly, the Tat system comprises two distinct complexes: a TatABC complex, containing multiple copies of TatA, TatB and TatC subunits, and a separate TatA complex, containing only TatA subunits. Substrates initially bind to the TatABC complex, which probably triggers association of the separate TatA complex to form the active translocon.

It localises to the cell inner membrane. In terms of biological role, part of the twin-arginine translocation (Tat) system that transports large folded proteins containing a characteristic twin-arginine motif in their signal peptide across membranes. Together with TatC, TatB is part of a receptor directly interacting with Tat signal peptides. TatB may form an oligomeric binding site that transiently accommodates folded Tat precursor proteins before their translocation. This chain is Sec-independent protein translocase protein TatB, found in Vibrio cholerae serotype O1 (strain ATCC 39315 / El Tor Inaba N16961).